Reading from the N-terminus, the 891-residue chain is MSGVNDIRSAFLNYFAKNGHDIVPSSPLVPRNDPTLMFTNAGMVQFKNVFTGLEKRPYQRATTSQKCVRAGGKHNDLDNVGYTARHLTFFEMLGNFSFGDYFKERAIELAWNLITKEYGLKKDKLLVTVYHTDDEAASYWKKIAGFSDDRIIRIPTSDNFWAMGDTGPCGPCSEIFIDQGEHIFGGPPGSPEEDGDRFLEFWNLVFMQYEQVTKDERLPLPRPSIDTGMGLERMANILQGVDSVFETDLFRSLIDATSSALGRGPGEEDAASFRVIADHLRSSSFLIADGVLPSNEGRGYVLRRIMRRAMRHAQLLGASEPLMWRLVWALVREMGQAYPELVRAEAMIEETMRLEETRFRKTLDRGLAILDEKSASLKKGDMFDGDTAFTLYDTYGFPLDLTQDALRNRGISVDIASFTDAMDRQRAKARASWAGSGEAATETVWFGLREKLGATEFLGYDTETAEGVVTALVADGKEVDALKAGDSGAIVLNQTPFYAESGGQVGDTGVLSGDGVRFRVTDTLKKAGDLFVHFGTVEEGAIKRDAALQLDVDHARRSSIRANHSATHLLHEALRQVLGDHIAQKGSMVAPDRLRFDFVHQKPITPDELRRVEDIANDIVLENDEVTTRLMAVDDAREAGARALFGEKYGDEVRVVSMGKTARDSGSNALGWSVELCGGTHVKRTGDIGLVSITGESAVASGVRRIEALTGRYARQSANAAINTAKQAAAELRTTVDDMPARIAALMEERKKLERELSDARKKLAMGGGGAAGAADGGADVREVGGVKLMARAVEGIEIKDLKSLVDQGKKQLGSGVIALVATSEDGKGSIVVGVTPDLVARFSAVDLVRTASVVLGGKGGGGKPDMAQAGGPDGSKAQAALDAIAAAIGG.

Positions 564, 568, 677, and 681 each coordinate Zn(2+).

It belongs to the class-II aminoacyl-tRNA synthetase family. Zn(2+) is required as a cofactor.

Its subcellular location is the cytoplasm. The enzyme catalyses tRNA(Ala) + L-alanine + ATP = L-alanyl-tRNA(Ala) + AMP + diphosphate. Catalyzes the attachment of alanine to tRNA(Ala) in a two-step reaction: alanine is first activated by ATP to form Ala-AMP and then transferred to the acceptor end of tRNA(Ala). Also edits incorrectly charged Ser-tRNA(Ala) and Gly-tRNA(Ala) via its editing domain. The chain is Alanine--tRNA ligase from Rhodopseudomonas palustris (strain HaA2).